A 237-amino-acid chain; its full sequence is RNA polymerase sigma-28 factor (237 aa).

Residues 1–19 (MSLFAAIGYMVREVFVFVS) constitute a propeptide that is removed on maturation. Positions 77-90 (DLISIGTIGLIKAI) match the Polymerase core binding motif. A DNA-binding region (H-T-H motif) is located at residues 197–206 (QREIAKALGI).

This sequence belongs to the sigma-70 factor family. Post-translationally, proteolytically cleaved in the N-terminus probably by a SpoIIGA homolog to yield the active peptide.

Functionally, sigma factors are initiation factors that promote the attachment of RNA polymerase to specific initiation sites and are then released. This sigma factor directs the transcription of crystal protein genes, a sporulation-regulated event. The sequence is that of RNA polymerase sigma-28 factor (sigK) from Bacillus thuringiensis subsp. kurstaki.